The chain runs to 116 residues: Iron-sulfur cluster insertion protein ErpA (116 aa).

Iron-sulfur cluster is bound by residues cysteine 44, cysteine 108, and cysteine 110.

Belongs to the HesB/IscA family. Homodimer. Iron-sulfur cluster serves as cofactor.

Required for insertion of 4Fe-4S clusters for at least IspG. This chain is Iron-sulfur cluster insertion protein ErpA, found in Pseudomonas fluorescens (strain ATCC BAA-477 / NRRL B-23932 / Pf-5).